The following is a 105-amino-acid chain: Large ribosomal subunit protein bL21 (105 aa).

Belongs to the bacterial ribosomal protein bL21 family. Part of the 50S ribosomal subunit. Contacts protein L20.

This protein binds to 23S rRNA in the presence of protein L20. This chain is Large ribosomal subunit protein bL21, found in Dictyoglomus thermophilum (strain ATCC 35947 / DSM 3960 / H-6-12).